The primary structure comprises 525 residues: Probable protein kinase UbiB (525 aa).

One can recognise a Protein kinase domain in the interval 118-500 (EFERVPVASA…QRRTNRLLQA (383 aa)). Residues 124 to 132 (VASASIAQV) and K150 contribute to the ATP site. Residue D285 is the Proton acceptor of the active site. Residues 501-521 (LLVFGLAVGAGAVIARVLIVL) traverse the membrane as a helical segment.

This sequence belongs to the ABC1 family. UbiB subfamily.

It is found in the cell inner membrane. Its pathway is cofactor biosynthesis; ubiquinone biosynthesis [regulation]. Functionally, is probably a protein kinase regulator of UbiI activity which is involved in aerobic coenzyme Q (ubiquinone) biosynthesis. This is Probable protein kinase UbiB from Burkholderia mallei (strain SAVP1).